The following is a 602-amino-acid chain: Leucine-rich repeat-containing protein 40 (602 aa).

A disordered region spans residues 1 to 22 (MSRLKRIAGQDPRAGFKEGGRD). Ser71 is subject to Phosphoserine. LRR repeat units follow at residues 83 to 104 (DLTKLIISNNKLQSLTDDLRLL), 106 to 127 (ALTVLDIHDNQLTSLPSAIREL), 129 to 150 (NLQKLNVSHNKLKILPEEITNL), 152 to 173 (NLKCLYLQHNELTCISEGFEQF), 175 to 196 (NLEDLDLSNNRLTTVPASFSSL), 198 to 219 (SLVRLNLSSNELKSLPAEINRM), 221 to 242 (RLKHLDCNSNLLETIPPELAGM), 244 to 265 (SLELLYLRRNKLRFLPEFPSCS), 266 to 286 (LLKELHVGENQIEMLEAEHLK), 290 to 311 (SILVLDLRDNKLKSVPDEIILL), 313 to 335 (SLERLDLSNNDISSLPYSLGNLH), 336 to 356 (LKFLALEGNPLRTIRREIINK), 400 to 421 (TLKILDYSDKQATLIPDEVFDA), 426 to 447 (IITSINFSKNQLCEIPKRMVEL), 450 to 472 (MVSDVNLSFNKLSFISLELCVLQ), 473 to 494 (KLTFLDLRNNFLNSLPEEVESL), 496 to 517 (RLQTINLSFNRFKMLPEVLYRI), 519 to 540 (TLETILISNNQVGSVDPQKMKM), 543 to 564 (NLTTLDLQNNDLLQIPPELGNC), and 566 to 586 (NLRTLLLDGNPFRVPRAAILM).

This Pongo abelii (Sumatran orangutan) protein is Leucine-rich repeat-containing protein 40 (LRRC40).